The chain runs to 136 residues: MTMTVIPQNSPIQATGRRKTATATVILKPGKGEVSINGKDLEFYFPTFVHRYEVFKPLEVIEGTKKFDIIAKARGGGLMGQAQALKLAVSRALIKYDPSYRSLLKKEGLLTRDPRMKERKKTGQPGARKRFQFSKR.

The disordered stretch occupies residues 111–136; that stretch reads TRDPRMKERKKTGQPGARKRFQFSKR. The segment covering 117–136 has biased composition (basic residues); sequence KERKKTGQPGARKRFQFSKR.

Belongs to the universal ribosomal protein uS9 family.

This is Small ribosomal subunit protein uS9 from Methylacidiphilum infernorum (isolate V4) (Methylokorus infernorum (strain V4)).